The primary structure comprises 397 residues: MTVIGTPFTDNATRVMLLGSGELGREVALELIRYGCEVIAVDRYAHAPAMQVAQHSHVINMLDGTALRAVVEQVKPALIVPEIEAIATDELVKLEAEGYTVVPTARAAQLTMNREGIRCLAAEELSLPTSPYRFADSLAGYQQAVREIGFPCVVKPVMSSSGKGQSTLKNEADILPAWEYAQSGGRAGKGRVIVEGFVDFDYEITLLTVRHKAGSEIKTSYCAPIGHRQENGDYQESWQPQPMSAAALQASREVALAITDALGGLGIFGVELFIKGDQVYFSEVSPRPHDTGLVTLISQTLSEFALHARAILGLPIPTIEQRGASASSVLLIQGQSEAMRYHGLNTALANADTEVRLFGKPDINGSRRLGVALAKADTIDAARDKANTAIAAFKVDL.

Residues 22 to 23 and E82 each bind N(1)-(5-phospho-beta-D-ribosyl)glycinamide; that span reads EL. ATP is bound by residues R114, K155, 160-165, 195-198, and E203; these read SSGKGQ and EGFV. Residues 119–312 enclose the ATP-grasp domain; the sequence is CLAAEELSLP…EFALHARAIL (194 aa). Residues E271 and E283 each contribute to the Mg(2+) site. Residues D290, K360, and 367 to 368 contribute to the N(1)-(5-phospho-beta-D-ribosyl)glycinamide site; that span reads RR.

Belongs to the PurK/PurT family. In terms of assembly, homodimer.

The catalysed reaction is N(1)-(5-phospho-beta-D-ribosyl)glycinamide + formate + ATP = N(2)-formyl-N(1)-(5-phospho-beta-D-ribosyl)glycinamide + ADP + phosphate + H(+). Its pathway is purine metabolism; IMP biosynthesis via de novo pathway; N(2)-formyl-N(1)-(5-phospho-D-ribosyl)glycinamide from N(1)-(5-phospho-D-ribosyl)glycinamide (formate route): step 1/1. In terms of biological role, involved in the de novo purine biosynthesis. Catalyzes the transfer of formate to 5-phospho-ribosyl-glycinamide (GAR), producing 5-phospho-ribosyl-N-formylglycinamide (FGAR). Formate is provided by PurU via hydrolysis of 10-formyl-tetrahydrofolate. The polypeptide is Formate-dependent phosphoribosylglycinamide formyltransferase (Alcanivorax borkumensis (strain ATCC 700651 / DSM 11573 / NCIMB 13689 / SK2)).